The sequence spans 432 residues: Glutamyl-tRNA reductase (432 aa).

Substrate is bound by residues 49-52, serine 107, 112-114, and glutamine 118; these read TCNR and ETQ. Cysteine 50 functions as the Nucleophile in the catalytic mechanism. 186-191 serves as a coordination point for NADP(+); that stretch reads GAGEMG.

Belongs to the glutamyl-tRNA reductase family. As to quaternary structure, homodimer.

The enzyme catalyses (S)-4-amino-5-oxopentanoate + tRNA(Glu) + NADP(+) = L-glutamyl-tRNA(Glu) + NADPH + H(+). Its pathway is porphyrin-containing compound metabolism; protoporphyrin-IX biosynthesis; 5-aminolevulinate from L-glutamyl-tRNA(Glu): step 1/2. Functionally, catalyzes the NADPH-dependent reduction of glutamyl-tRNA(Glu) to glutamate 1-semialdehyde (GSA). This chain is Glutamyl-tRNA reductase, found in Campylobacter jejuni subsp. jejuni serotype O:6 (strain 81116 / NCTC 11828).